The chain runs to 47 residues: Large ribosomal subunit protein bL32c (47 aa).

This sequence belongs to the bacterial ribosomal protein bL32 family.

It is found in the plastid. In Prototheca wickerhamii, this protein is Large ribosomal subunit protein bL32c (rpl32).